Consider the following 150-residue polypeptide: SsrA-binding protein (150 aa).

It belongs to the SmpB family.

Its subcellular location is the cytoplasm. Functionally, required for rescue of stalled ribosomes mediated by trans-translation. Binds to transfer-messenger RNA (tmRNA), required for stable association of tmRNA with ribosomes. tmRNA and SmpB together mimic tRNA shape, replacing the anticodon stem-loop with SmpB. tmRNA is encoded by the ssrA gene; the 2 termini fold to resemble tRNA(Ala) and it encodes a 'tag peptide', a short internal open reading frame. During trans-translation Ala-aminoacylated tmRNA acts like a tRNA, entering the A-site of stalled ribosomes, displacing the stalled mRNA. The ribosome then switches to translate the ORF on the tmRNA; the nascent peptide is terminated with the 'tag peptide' encoded by the tmRNA and targeted for degradation. The ribosome is freed to recommence translation, which seems to be the essential function of trans-translation. The protein is SsrA-binding protein of Rubrobacter xylanophilus (strain DSM 9941 / JCM 11954 / NBRC 16129 / PRD-1).